The chain runs to 353 residues: UPF0283 membrane protein YcjF (353 aa).

Positions 1–19 (MSEPLKPRIDFAEPLKEEP) are enriched in basic and acidic residues. The interval 1–35 (MSEPLKPRIDFAEPLKEEPTSAFKAQQTFSEAESR) is disordered. 3 helical membrane-spanning segments follow: residues 70-90 (MVMGGLALFGASVVGQGVQWT), 100-120 (VALGGCAAGALIIGAGVGSVV), and 213-233 (ESTLMIAVSSLALVDMAFIAW).

The protein belongs to the UPF0283 family.

Its subcellular location is the cell inner membrane. The sequence is that of UPF0283 membrane protein YcjF from Salmonella gallinarum (strain 287/91 / NCTC 13346).